Consider the following 488-residue polypeptide: UDP-N-acetylmuramoyl-L-alanyl-D-glutamate--2,6-diaminopimelate ligase (488 aa).

Residues Leu24, Ser26, and 41 to 43 (HQV) contribute to the UDP-N-acetyl-alpha-D-muramoyl-L-alanyl-D-glutamate site. 113–119 (GTNGKTT) contributes to the ATP binding site. UDP-N-acetyl-alpha-D-muramoyl-L-alanyl-D-glutamate-binding positions include Asn154, 155 to 156 (TT), Ser182, Gln188, and Arg190. N6-carboxylysine is present on Lys222. Meso-2,6-diaminopimelate-binding positions include Arg386, 410–413 (DNPR), Gly461, and Glu465. Positions 410-413 (DNPR) match the Meso-diaminopimelate recognition motif motif.

It belongs to the MurCDEF family. MurE subfamily. Mg(2+) is required as a cofactor. In terms of processing, carboxylation is probably crucial for Mg(2+) binding and, consequently, for the gamma-phosphate positioning of ATP.

The protein resides in the cytoplasm. It catalyses the reaction UDP-N-acetyl-alpha-D-muramoyl-L-alanyl-D-glutamate + meso-2,6-diaminopimelate + ATP = UDP-N-acetyl-alpha-D-muramoyl-L-alanyl-gamma-D-glutamyl-meso-2,6-diaminopimelate + ADP + phosphate + H(+). It functions in the pathway cell wall biogenesis; peptidoglycan biosynthesis. Catalyzes the addition of meso-diaminopimelic acid to the nucleotide precursor UDP-N-acetylmuramoyl-L-alanyl-D-glutamate (UMAG) in the biosynthesis of bacterial cell-wall peptidoglycan. The protein is UDP-N-acetylmuramoyl-L-alanyl-D-glutamate--2,6-diaminopimelate ligase of Haemophilus influenzae (strain PittGG).